The sequence spans 286 residues: Eukaryotic translation initiation factor 3 subunit F-2 (286 aa).

Residues 11 to 147 (ILLQPLVLLH…MRLYTAVVMG (137 aa)) form the MPN domain.

It belongs to the eIF-3 subunit F family. As to quaternary structure, component of the eukaryotic translation initiation factor 3 (eIF-3) complex. The eIF-3 complex interacts with pix.

The protein resides in the cytoplasm. Functionally, component of the eukaryotic translation initiation factor 3 (eIF-3) complex, which is involved in protein synthesis of a specialized repertoire of mRNAs and, together with other initiation factors, stimulates binding of mRNA and methionyl-tRNAi to the 40S ribosome. The eIF-3 complex specifically targets and initiates translation of a subset of mRNAs involved in cell proliferation. The sequence is that of Eukaryotic translation initiation factor 3 subunit F-2 from Drosophila willistoni (Fruit fly).